The following is a 264-amino-acid chain: Ribosomal protein L11 methyltransferase (264 aa).

Positions 116, 137, 159, and 200 each coordinate S-adenosyl-L-methionine.

It belongs to the methyltransferase superfamily. PrmA family.

The protein localises to the cytoplasm. It catalyses the reaction L-lysyl-[protein] + 3 S-adenosyl-L-methionine = N(6),N(6),N(6)-trimethyl-L-lysyl-[protein] + 3 S-adenosyl-L-homocysteine + 3 H(+). Methylates ribosomal protein L11. This chain is Ribosomal protein L11 methyltransferase, found in Thermotoga maritima (strain ATCC 43589 / DSM 3109 / JCM 10099 / NBRC 100826 / MSB8).